Reading from the N-terminus, the 2629-residue chain is Protein DOP1 homolog (2629 aa).

7 disordered regions span residues 561–584 (NKGV…SRLN), 605–652 (SASN…TPRS), 688–710 (AGNV…PQFY), 1278–1340 (MDES…SSSA), 1371–1395 (TYRL…QTEH), 1435–1471 (ISKT…ATDS), and 1766–1785 (RQDT…SPTR). Polar residues-rich tracts occupy residues 605-615 (SASNQSVGRQS) and 636-647 (ASDTGQQSSSDL). Residues 1307-1320 (DITDNSDSSDFESD) are compositionally biased toward acidic residues. Basic and acidic residues predominate over residues 1321–1333 (SELRETSLEKEDS). 2 stretches are compositionally biased toward polar residues: residues 1381–1391 (GENSLNSVATD) and 1435–1450 (ISKT…SCSQ).

This sequence belongs to the DOP1 family.

Its subcellular location is the golgi apparatus membrane. Functionally, may be involved in protein traffic between late Golgi and early endosomes. In Drosophila pseudoobscura pseudoobscura (Fruit fly), this protein is Protein DOP1 homolog.